A 209-amino-acid chain; its full sequence is Mitochondrial import inner membrane translocase subunit Tim23 (209 aa).

The next 3 membrane-spanning stretches (helical) occupy residues 73-93 (FELA…FGAM), 125-145 (ALWA…GVII), and 181-197 (GLAG…YNNW).

The protein belongs to the Tim17/Tim22/Tim23 family. Component of the TIM23 complex at least composed of TIMM23, TIMM17 (TIMM17A or TIMM17B) and TIMM50; within this complex, directly interacts with TIMM50. The complex interacts with the TIMM44 component of the PAM complex and with DNAJC15. Upon mitochondrial depolarization, interacts with PINK1; the interaction is required for PINK1 accumulation at the outer mitochondrial membrane, kinase activation by autophosphorylation and PRKN recruitement to mitochondria.

It is found in the mitochondrion inner membrane. Functionally, essential component of the TIM23 complex, a complex that mediates the translocation of transit peptide-containing proteins across the mitochondrial inner membrane. Has a role in the activation of stress-induced mitophagy by protecting PINK1 from OMA1-mediated degradation and facilitating its accumulation at the outer mitochondrial membrane in response to depolarization. This Mus musculus (Mouse) protein is Mitochondrial import inner membrane translocase subunit Tim23 (Timm23).